Here is a 254-residue protein sequence, read N- to C-terminus: Phycobilisome rod-core linker polypeptide CpcG3 (254 aa).

In terms of domain architecture, PBS-linker spans 11 to 191 (SSQNHRVKSF…DFQETAGTVK (181 aa)).

This sequence belongs to the phycobilisome linker protein family. As to quaternary structure, the phycobilisome is a hemidiscoidal structure that is composed of two distinct substructures: a core complex and a number of rods radiating from the core.

The protein resides in the cellular thylakoid membrane. Rod-core linker protein required for attachment of phycocyanin to allophycocyanin in cores of phycobilisomes. Functionally, linker polypeptides determine the state of aggregation and the location of the disk-shaped phycobiliprotein units within the phycobilisome and modulate their spectroscopic properties in order to mediate a directed and optimal energy transfer. The protein is Phycobilisome rod-core linker polypeptide CpcG3 (cpcG3) of Mastigocladus laminosus (Fischerella sp.).